Consider the following 86-residue polypeptide: Small ribosomal subunit protein bS20 (86 aa).

It belongs to the bacterial ribosomal protein bS20 family.

Its function is as follows. Binds directly to 16S ribosomal RNA. This Bifidobacterium longum subsp. infantis (strain ATCC 15697 / DSM 20088 / JCM 1222 / NCTC 11817 / S12) protein is Small ribosomal subunit protein bS20.